We begin with the raw amino-acid sequence, 1223 residues long: ATP-dependent DNA helicase P143 (1223 aa).

The Nuclear localization signal motif lies at 692–701 (RKCRCVQKIK). An ATP-binding site is contributed by 919 to 926 (GVPLSGKS). A DNA-binding region (H-T-H motif) is located at residues 967-981 (TINELKKCSESFFKK).

The protein localises to the host nucleus. The catalysed reaction is ATP + H2O = ADP + phosphate + H(+). Functionally, essential for the initiation of viral DNA replication, it may contribute to other functions such as controlling the switch to the late phase and leading to the inhibition of host protein synthesis. Required for late and very late gene expression. In Orgyia pseudotsugata multicapsid polyhedrosis virus (OpMNPV), this protein is ATP-dependent DNA helicase P143 (P143).